The sequence spans 317 residues: MANTLAQLKSLTTIVADTGDIEAIKRYQPQDATTNPSLILKASQIPEYAPYIDQAIAWAKTQSNDVAQQIEDAGDKLAVTIGVEILKYVPGRMSTEVDARLSFDKQKSIDKAHKLIKLYQEAGIDKSRILIKLASTWEGICAAKELEQEGINCNLTLLFSFAQARACAEAGVYLVSPFVGRILDWYKKDTGQDYTAETDPGVISVTEIYNYYKQHGHNTVVMGASFRNTGEIIELAGCDRLTIGPALLEELANSDQLVVQKLKPALTQTAAPAPMSEAEFRWDFNEDAMAVDKLAEGIRNFAIDQGKLEVMLKAKLA.

Lys-132 serves as the catalytic Schiff-base intermediate with substrate.

It belongs to the transaldolase family. Type 1 subfamily. In terms of assembly, homodimer.

The protein resides in the cytoplasm. It catalyses the reaction D-sedoheptulose 7-phosphate + D-glyceraldehyde 3-phosphate = D-erythrose 4-phosphate + beta-D-fructose 6-phosphate. The protein operates within carbohydrate degradation; pentose phosphate pathway; D-glyceraldehyde 3-phosphate and beta-D-fructose 6-phosphate from D-ribose 5-phosphate and D-xylulose 5-phosphate (non-oxidative stage): step 2/3. Its function is as follows. Transaldolase is important for the balance of metabolites in the pentose-phosphate pathway. This is Transaldolase from Shewanella denitrificans (strain OS217 / ATCC BAA-1090 / DSM 15013).